The following is a 162-amino-acid chain: MPVDPAKLAALQKKSGAQSGGKGTPRRPGKKVAGRNISEDEKKLSATLKKFNAQEITGISEVNMFKEDGTVLHFPKVHVEGSVASNTFAISGPSQQKDIAELIPDILPQMGQDALLQLQQAAVQFSKLQEQAKKTAGGPDAAKEAGDDEIPNLVENFEDNVE.

Disordered regions lie at residues 1–39 (MPVDPAKLAALQKKSGAQSGGKGTPRRPGKKVAGRNISE) and 130–162 (EQAKKTAGGPDAAKEAGDDEIPNLVENFEDNVE). The span at 24 to 33 (TPRRPGKKVA) shows a compositional bias: basic residues. One can recognise an NAC-A/B domain in the interval 38–103 (SEDEKKLSAT…SQQKDIAELI (66 aa)). Residues 146–162 (GDDEIPNLVENFEDNVE) are compositionally biased toward acidic residues.

It belongs to the NAC-beta family. Part of the nascent polypeptide-associated complex (NAC), consisting of EGD2 and EGD1. NAC associates with ribosomes via EGD1.

The protein localises to the cytoplasm. The protein resides in the nucleus. Functionally, component of the nascent polypeptide-associated complex (NAC), a dynamic component of the ribosomal exit tunnel, protecting the emerging polypeptides from interaction with other cytoplasmic proteins to ensure appropriate nascent protein targeting. The NAC complex also promotes mitochondrial protein import by enhancing productive ribosome interactions with the outer mitochondrial membrane and blocks the inappropriate interaction of ribosomes translating non-secretory nascent polypeptides with translocation sites in the membrane of the endoplasmic reticulum. EGD1 may act as a transcription factor that exert a negative effect on the expression of several genes that are transcribed by RNA polymerase II. The sequence is that of Nascent polypeptide-associated complex subunit beta (EGD1) from Yarrowia lipolytica (strain CLIB 122 / E 150) (Yeast).